The chain runs to 121 residues: UPF0091 protein PH1428 (121 aa).

The protein belongs to the UPF0091 family.

The protein is UPF0091 protein PH1428 of Pyrococcus horikoshii (strain ATCC 700860 / DSM 12428 / JCM 9974 / NBRC 100139 / OT-3).